The primary structure comprises 509 residues: ATP synthase subunit alpha (509 aa).

169–176 lines the ATP pocket; it reads GDRQTGKT.

Belongs to the ATPase alpha/beta chains family. In terms of assembly, F-type ATPases have 2 components, CF(1) - the catalytic core - and CF(0) - the membrane proton channel. CF(1) has five subunits: alpha(3), beta(3), gamma(1), delta(1), epsilon(1). CF(0) has three main subunits: a(1), b(2) and c(9-12). The alpha and beta chains form an alternating ring which encloses part of the gamma chain. CF(1) is attached to CF(0) by a central stalk formed by the gamma and epsilon chains, while a peripheral stalk is formed by the delta and b chains.

The protein resides in the cell inner membrane. The enzyme catalyses ATP + H2O + 4 H(+)(in) = ADP + phosphate + 5 H(+)(out). Functionally, produces ATP from ADP in the presence of a proton gradient across the membrane. The alpha chain is a regulatory subunit. This chain is ATP synthase subunit alpha, found in Rhizobium etli (strain CIAT 652).